The chain runs to 465 residues: Coumaroyl-CoA:anthocyanidin 3-O-glucoside-6''-O-coumaroyltransferase 2 (465 aa).

Met1 bears the N-acetylmethionine mark. Residues His173 and Asp406 each act as proton acceptor in the active site.

Belongs to the plant acyltransferase family. Highly expressed in flowers, and leaves. Lower levels of expression in stems, roots and siliques.

In terms of biological role, involved in the acylation of the 6'' position of the 3-O-glucose residue of anthocyanin. Also able to use flavonol 3-glucosides as the acyl acceptor. The chain is Coumaroyl-CoA:anthocyanidin 3-O-glucoside-6''-O-coumaroyltransferase 2 (3AT2) from Arabidopsis thaliana (Mouse-ear cress).